Consider the following 391-residue polypeptide: S-adenosylmethionine synthase (391 aa).

Position 14 (histidine 14) interacts with ATP. Residue aspartate 16 participates in Mg(2+) binding. Glutamate 42 contacts K(+). Positions 55 and 98 each coordinate L-methionine. Residues 98 to 108 (QSVDIAIGVDE) form a flexible loop region. ATP contacts are provided by residues 172–174 (DGK), 238–239 (RF), aspartate 247, 253–254 (RK), alanine 270, and lysine 274. Aspartate 247 contributes to the L-methionine binding site. Lysine 278 provides a ligand contact to L-methionine.

Belongs to the AdoMet synthase family. Homotetramer; dimer of dimers. It depends on Mg(2+) as a cofactor. The cofactor is K(+).

It is found in the cytoplasm. It carries out the reaction L-methionine + ATP + H2O = S-adenosyl-L-methionine + phosphate + diphosphate. The protein operates within amino-acid biosynthesis; S-adenosyl-L-methionine biosynthesis; S-adenosyl-L-methionine from L-methionine: step 1/1. In terms of biological role, catalyzes the formation of S-adenosylmethionine (AdoMet) from methionine and ATP. The overall synthetic reaction is composed of two sequential steps, AdoMet formation and the subsequent tripolyphosphate hydrolysis which occurs prior to release of AdoMet from the enzyme. This Clostridium botulinum (strain Okra / Type B1) protein is S-adenosylmethionine synthase.